The sequence spans 302 residues: Homoserine O-acetyltransferase (302 aa).

C142 (acyl-thioester intermediate) is an active-site residue. 2 residues coordinate substrate: K163 and S192. The active-site Proton acceptor is the H235. E237 is a catalytic residue. R249 provides a ligand contact to substrate.

Belongs to the MetA family.

Its subcellular location is the cytoplasm. The enzyme catalyses L-homoserine + acetyl-CoA = O-acetyl-L-homoserine + CoA. It participates in amino-acid biosynthesis; L-methionine biosynthesis via de novo pathway; O-acetyl-L-homoserine from L-homoserine: step 1/1. In terms of biological role, transfers an acetyl group from acetyl-CoA to L-homoserine, forming acetyl-L-homoserine. The protein is Homoserine O-acetyltransferase of Geobacillus sp. (strain WCH70).